A 256-amino-acid chain; its full sequence is Thiazole synthase (256 aa).

Residue lysine 96 is the Schiff-base intermediate with DXP of the active site. Residues glycine 157, 184–185, and 206–207 each bind 1-deoxy-D-xylulose 5-phosphate; these read AG and NT.

Belongs to the ThiG family. As to quaternary structure, homotetramer. Forms heterodimers with either ThiH or ThiS.

It localises to the cytoplasm. It carries out the reaction [ThiS sulfur-carrier protein]-C-terminal-Gly-aminoethanethioate + 2-iminoacetate + 1-deoxy-D-xylulose 5-phosphate = [ThiS sulfur-carrier protein]-C-terminal Gly-Gly + 2-[(2R,5Z)-2-carboxy-4-methylthiazol-5(2H)-ylidene]ethyl phosphate + 2 H2O + H(+). Its pathway is cofactor biosynthesis; thiamine diphosphate biosynthesis. Its function is as follows. Catalyzes the rearrangement of 1-deoxy-D-xylulose 5-phosphate (DXP) to produce the thiazole phosphate moiety of thiamine. Sulfur is provided by the thiocarboxylate moiety of the carrier protein ThiS. In vitro, sulfur can be provided by H(2)S. The sequence is that of Thiazole synthase from Bartonella tribocorum (strain CIP 105476 / IBS 506).